The chain runs to 876 residues: MDPGDPAGDPAAGERHRMGRDPLLLLQALQTLWSTRERKQLREEAWRGFAALDDPLAGLLDMLESCRGQRGEGPSLAAWISHQLQCWLQAQPCPSLAQHSLRLKQLQARAVKVLTESPPSLAAPLASIFQLQDADRSCLLAHVHRLHHEGRFREAATLGATLKLQSELGVEKMSIPLLLQDKVALVERYVAGFPDLQRRLLVLMDSWCQPGFDIKDVARRYPEVTSLSLEKLSPKALSRQVLRLQERYGVAPALCPNAAIQQRLAALRHLCHKRFVEKSLSQENWTDHVQGLVGQSPWLQEQLSQLLVSHSDPVTAAQCAMELLLPEERLPAAVAVELRRFRLQGRATEADSRLEVKDMKDRYYQLPIPRENVHLLASWEDLTRHEGALLQCHQVVGVDVEWTPVFVAGGRPRPSLLQVAVEGHVFLLDVLALSQPPTGQGAQAFSRLVAQLLSDPSITKLGYGMVGDLQKLGTSCPALAHVEKQILGGMDLLLVHRQMRVASVPAPAVDRARELRGLSLLVQQVLGTALDKTQQLSNWDRRPLCEEQVIYAAADAYCLLEVHQALCREPARFHLSEDLAGSRRPRHRERPGARKPPGLQKASAPAAPRQVPVAVAVSEGAAPQIPARAFRVVCDNMLQGLARSLRCLGVDARMLGNGEDHRRAAEVARQEGRIILTSGQPFHKLRAQVGAGRCLSVDCSLKAQQQAKAVLKHFNVRVTHADIFSRCQACNCDQYLKVSRDMMKQLMWLSSHQEGPRSSGDEATQSQAVQEPGPAPDAAPEGCTYDRPCRWLQMADLRAETPDMLADGTRLQLAGVPVGVLRTPGLRCFYCCTGCGKVFWDGSHLGRVATHFRDMLESAPSPCEPSPAPSPASSPF.

In terms of domain architecture, 3'-5' exonuclease spans 517–571 (GLSLLVQQVLGTALDKTQQLSNWDRRPLCEEQVIYAAADAYCLLEVHQALCREPA). Disordered regions lie at residues 578–607 (DLAG…APAA) and 751–781 (SHQE…AAPE).

It belongs to the mut-7 family. The cofactor is Mg(2+).

Its function is as follows. Possesses 3'-5' exoribonuclease activity. Required for 3'-end trimming of AGO1-bound miRNAs. The chain is Exonuclease mut-7 homolog (EXD3) from Homo sapiens (Human).